Reading from the N-terminus, the 219-residue chain is Small ribosomal subunit protein uS5 (219 aa).

Residues L52–V115 form the S5 DRBM domain. Residues L196–E219 are disordered.

It belongs to the universal ribosomal protein uS5 family. Part of the 30S ribosomal subunit. Contacts protein S4.

Its function is as follows. With S4 and S12 plays an important role in translational accuracy. The chain is Small ribosomal subunit protein uS5 from Haloquadratum walsbyi (strain DSM 16790 / HBSQ001).